Consider the following 214-residue polypeptide: Pyridoxine/pyridoxamine 5'-phosphate oxidase (214 aa).

Substrate-binding positions include 9–12 (RLDY) and lysine 67. FMN-binding positions include 62–67 (RMVLLK), 77–78 (FT), lysine 84, and glutamine 106. Residues tyrosine 124, arginine 128, and serine 132 each coordinate substrate. FMN-binding positions include 141 to 142 (QS) and tryptophan 186. 192 to 194 (RLH) is a binding site for substrate. Arginine 196 lines the FMN pocket.

The protein belongs to the pyridoxamine 5'-phosphate oxidase family. In terms of assembly, homodimer. FMN is required as a cofactor.

The enzyme catalyses pyridoxamine 5'-phosphate + O2 + H2O = pyridoxal 5'-phosphate + H2O2 + NH4(+). The catalysed reaction is pyridoxine 5'-phosphate + O2 = pyridoxal 5'-phosphate + H2O2. The protein operates within cofactor metabolism; pyridoxal 5'-phosphate salvage; pyridoxal 5'-phosphate from pyridoxamine 5'-phosphate: step 1/1. It participates in cofactor metabolism; pyridoxal 5'-phosphate salvage; pyridoxal 5'-phosphate from pyridoxine 5'-phosphate: step 1/1. Its function is as follows. Catalyzes the oxidation of either pyridoxine 5'-phosphate (PNP) or pyridoxamine 5'-phosphate (PMP) into pyridoxal 5'-phosphate (PLP). The polypeptide is Pyridoxine/pyridoxamine 5'-phosphate oxidase (Microcystis aeruginosa (strain NIES-843 / IAM M-2473)).